Consider the following 159-residue polypeptide: Ribosomal RNA large subunit methyltransferase H (159 aa).

S-adenosyl-L-methionine-binding positions include Leu76, Gly108, and 127-132 (FSKMTF).

It belongs to the RNA methyltransferase RlmH family. Homodimer.

Its subcellular location is the cytoplasm. The catalysed reaction is pseudouridine(1915) in 23S rRNA + S-adenosyl-L-methionine = N(3)-methylpseudouridine(1915) in 23S rRNA + S-adenosyl-L-homocysteine + H(+). In terms of biological role, specifically methylates the pseudouridine at position 1915 (m3Psi1915) in 23S rRNA. The polypeptide is Ribosomal RNA large subunit methyltransferase H (Staphylococcus saprophyticus subsp. saprophyticus (strain ATCC 15305 / DSM 20229 / NCIMB 8711 / NCTC 7292 / S-41)).